The sequence spans 105 residues: Large ribosomal subunit protein eL30 (105 aa).

It belongs to the eukaryotic ribosomal protein eL30 family.

This is Large ribosomal subunit protein eL30 (RPL30) from Trypanosoma brucei brucei.